A 119-amino-acid chain; its full sequence is U-scoloptoxin(01)-Er1a (119 aa).

The first 22 residues, 1-22 (MEIHSNIILLLLIALFAIFVKM), serve as a signal peptide directing secretion. Residues 39–97 (NFACSGKKPGFYADEGFDCQVYHMCSPEGQLTTYLCGPGTIFNQKKLVCDLPTNYNCAD) form the Chitin-binding type-2 domain. The cysteines at positions 74 and 87 are disulfide-linked.

The protein belongs to the scoloptoxin-01 family. Post-translationally, contains 3 disulfide bonds. Expressed by the venom gland.

Its subcellular location is the secreted. This is U-scoloptoxin(01)-Er1a from Ethmostigmus rubripes (Giant centipede).